The sequence spans 593 residues: MMSGAAHSVRKGISCPTQDPNCTRIVESLSAWNDSVMSAYRLVDLPPTTTTTTSVAMVEESVYPFPTVDVPDHAHYTIGAVILTVGITGMLGNFLVIYAFSRSRTLRTPANLFIINLAITDFLMCATQAPIFFTTSMHKRWIFGEKGCELYAFCGALFGICSMITLMVIAVDRYFVITRPLASIGVLSQKRALLILLVAWVYSLGWSLPPFFGWSAYVPEGLLTSCTWDYMTFTPSVRAYTMLLFIFVFFIPLIVIIYCYFFIFRSIRTTNEAVGKINGDNKRDSMKRFQRLKNEWKMAKIALIVILMYVISWSPYSTVALTAFAGYSDFLTPYMNSVPAVIAKASAIHNPIIYAITHPKYRLAIAKYIPCLRLLLCVPKRDLHSFHSSLMSTRRSTVTSQSSDMSGRFRRTSTGKSRLSSASDSESGWTDTEADLSSMSSRPASRQVSCDISKDTAEMPDFKPCNSSSFKSKLKSHDSGIFEKSSSDVDDVSVAGIIQPDRTLTNAGDITDVPISRGAIGRIPSIVITSESSSLLPSVRPTYRISRSNVSTVGTNPARRDSRGGVQQGAAHLSNAAETPESGHIDNHRPQYL.

Residues 1–77 (MMSGAAHSVR…VDVPDHAHYT (77 aa)) lie on the Extracellular side of the membrane. A helical transmembrane segment spans residues 78–98 (IGAVILTVGITGMLGNFLVIY). The Cytoplasmic segment spans residues 99–112 (AFSRSRTLRTPANL). A helical membrane pass occupies residues 113 to 133 (FIINLAITDFLMCATQAPIFF). Over 134–150 (TTSMHKRWIFGEKGCEL) the chain is Extracellular. A disulfide bridge links Cys-148 with Cys-226. Residues 151 to 171 (YAFCGALFGICSMITLMVIAV) form a helical membrane-spanning segment. Residues 172–191 (DRYFVITRPLASIGVLSQKR) are Cytoplasmic-facing. Residues 192–212 (ALLILLVAWVYSLGWSLPPFF) traverse the membrane as a helical segment. Topologically, residues 213–243 (GWSAYVPEGLLTSCTWDYMTFTPSVRAYTML) are extracellular. The helical transmembrane segment at 244–264 (LFIFVFFIPLIVIIYCYFFIF) threads the bilayer. The Cytoplasmic portion of the chain corresponds to 265–300 (RSIRTTNEAVGKINGDNKRDSMKRFQRLKNEWKMAK). A helical membrane pass occupies residues 301 to 321 (IALIVILMYVISWSPYSTVAL). Residues 322-336 (TAFAGYSDFLTPYMN) are Extracellular-facing. Residues 337–357 (SVPAVIAKASAIHNPIIYAIT) traverse the membrane as a helical segment. Residue Lys-344 is modified to N6-(retinylidene)lysine. At 358 to 593 (HPKYRLAIAK…HIDNHRPQYL (236 aa)) the chain is on the cytoplasmic side. Disordered stretches follow at residues 397-449 (TVTS…RQVS) and 547-593 (RSNV…PQYL). The span at 414 to 449 (TGKSRLSSASDSESGWTDTEADLSSMSSRPASRQVS) shows a compositional bias: polar residues. Over residues 581–593 (ESGHIDNHRPQYL) the composition is skewed to basic and acidic residues.

Belongs to the G-protein coupled receptor 1 family. Opsin subfamily.

The protein resides in the cell membrane. Functionally, photoreceptor implicated in non-image-forming responses to light. May be able to isomerize covalently bound all-trans retinal back to 11-cis retinal. The protein is Melanopsin-A (opn4a) of Danio rerio (Zebrafish).